A 160-amino-acid chain; its full sequence is MNQIVLNIIIAFLWVLFQDEDHFKFSTFFSGYLIGLIVIYILHRFFSDDFYVRKIWVAIKFLGVYLYQLITSSISTINYILFKTKDMNPGLLSYETRLTSDWAITFLTILIIITPGSTVIRISQDSKKFFIHSIDVSEKEKDSLLRSIKHYEDLILEVSR.

The next 3 membrane-spanning stretches (helical) occupy residues 22 to 42 (HFKF…IYIL), 55 to 75 (IWVA…SSIS), and 100 to 120 (SDWA…STVI).

This sequence belongs to the CPA3 antiporters (TC 2.A.63) subunit E family. In terms of assembly, may form a heterooligomeric complex that consists of seven subunits: mnhA2, mnhB2, mnhC2, mnhD2, mnhE2, mnhF2 and mnhG2.

Its subcellular location is the cell membrane. In Staphylococcus aureus (strain Mu3 / ATCC 700698), this protein is Putative antiporter subunit mnhE2 (mnhE2).